The chain runs to 635 residues: Endo-1,4-beta-xylanase B (635 aa).

In terms of domain architecture, GH10 spans 1 to 337 (MNLKTAYEPY…KEAYYAVLKA (337 aa)). The Proton donor role is filled by E150. The Nucleophile role is filled by E255.

It belongs to the glycosyl hydrolase 10 (cellulase F) family.

The enzyme catalyses Endohydrolysis of (1-&gt;4)-beta-D-xylosidic linkages in xylans.. It participates in glycan degradation; xylan degradation. In terms of biological role, b.fibrisolvens is located in the rumen of ruminant animals, where it contributes to the animal's digestion of plant material by hydrolyzing hemicellulose with its xylanases. This chain is Endo-1,4-beta-xylanase B (xynB), found in Butyrivibrio fibrisolvens.